The following is a 530-amino-acid chain: Protein MGF 505-1R (530 aa).

This sequence belongs to the asfivirus MGF 505 family.

In terms of biological role, plays a role in virus cell tropism, and may be required for efficient virus replication in macrophages. The sequence is that of Protein MGF 505-1R from African swine fever virus (isolate Tick/Malawi/Lil 20-1/1983) (ASFV).